The sequence spans 613 residues: RNA polymerase-associated protein RTF1 homolog (613 aa).

Disordered regions lie at residues 1-90 (MSSS…DKAR) and 121-247 (QQLA…KDKI). Basic residues predominate over residues 55–68 (PAKKKTLTKRKRRA). A compositionally biased stretch (acidic residues) spans 72–81 (SDDDQVDDDL). Basic and acidic residues predominate over residues 167–176 (AAFHRPSDIN). Residues 175–209 (INRKHKEKNAMDALKNKRKEIEKKNAKNEALSIDA) are a coiled coil. Residues 215 to 235 (SGSSSSSSSSESSRSSSSSRE) show a composition bias toward low complexity. A compositionally biased stretch (basic and acidic residues) spans 236–247 (SSPERVSEKDKI). The region spanning 252–383 (VDGLSELRRA…KKQDIEKAIN (132 aa)) is the Plus3 domain. Residues 425–462 (RGDIREAEQIQTKIDEIERQADELEKERSKSISAIAFI) adopt a coiled-coil conformation. 2 disordered regions span residues 485 to 549 (SQDD…KTDI) and 564 to 613 (LKDF…SSAV). The span at 510 to 521 (TLSASSSTTNLS) shows a compositional bias: low complexity. Residues 569–586 (TPESSGNKRPSISSSKGV) are compositionally biased toward polar residues. The span at 602-613 (GSSTSAAPSSAV) shows a compositional bias: low complexity.

As to quaternary structure, component of the PAF1 complex which consists of at least cdc-73, ctr-9, leo-1, pafo-1 and rtfo-1.

Its subcellular location is the nucleus. In terms of biological role, component of the PAF1 complex which is a multifunctional complex involved in transcription initiation via genetic interactions with TATA-binding proteins, elongation and transcription-coupled histone modification. The protein is RNA polymerase-associated protein RTF1 homolog of Caenorhabditis elegans.